Consider the following 379-residue polypeptide: UDP-4-amino-4-deoxy-L-arabinose--oxoglutarate aminotransferase (379 aa).

Lysine 182 is subject to N6-(pyridoxal phosphate)lysine.

The protein belongs to the DegT/DnrJ/EryC1 family. ArnB subfamily. As to quaternary structure, homodimer. Pyridoxal 5'-phosphate serves as cofactor.

It catalyses the reaction UDP-4-amino-4-deoxy-beta-L-arabinose + 2-oxoglutarate = UDP-beta-L-threo-pentopyranos-4-ulose + L-glutamate. Its pathway is nucleotide-sugar biosynthesis; UDP-4-deoxy-4-formamido-beta-L-arabinose biosynthesis; UDP-4-deoxy-4-formamido-beta-L-arabinose from UDP-alpha-D-glucuronate: step 2/3. The protein operates within bacterial outer membrane biogenesis; lipopolysaccharide biosynthesis. Functionally, catalyzes the conversion of UDP-4-keto-arabinose (UDP-Ara4O) to UDP-4-amino-4-deoxy-L-arabinose (UDP-L-Ara4N). The modified arabinose is attached to lipid A and is required for resistance to polymyxin and cationic antimicrobial peptides. The protein is UDP-4-amino-4-deoxy-L-arabinose--oxoglutarate aminotransferase of Escherichia coli O81 (strain ED1a).